We begin with the raw amino-acid sequence, 911 residues long: Valine--tRNA ligase (911 aa).

The 'HIGH' region motif lies at 57 to 67 (PTVSGSLHVGH). A 'KMSKS' region motif is present at residues 599-603 (KMSKS). K602 is a binding site for ATP. Residues 882 to 911 (EESAAEDAPETEVAVEASELGEPPAKKPKH) form a disordered region.

Belongs to the class-I aminoacyl-tRNA synthetase family. ValS type 2 subfamily. Monomer.

It localises to the cytoplasm. The catalysed reaction is tRNA(Val) + L-valine + ATP = L-valyl-tRNA(Val) + AMP + diphosphate. In terms of biological role, catalyzes the attachment of valine to tRNA(Val). As ValRS can inadvertently accommodate and process structurally similar amino acids such as threonine, to avoid such errors, it has a 'posttransfer' editing activity that hydrolyzes mischarged Thr-tRNA(Val) in a tRNA-dependent manner. The sequence is that of Valine--tRNA ligase from Bifidobacterium longum (strain DJO10A).